A 36-amino-acid chain; its full sequence is Phospholipase A2 hemilipin-2 (36 aa).

Belongs to the phospholipase A2 family. Group III subfamily. Heterodimer composed of a small subunit and a large subunit; disulfid-linked. Ca(2+) serves as cofactor. As to expression, expressed by the venom gland.

The protein localises to the secreted. It catalyses the reaction a 1,2-diacyl-sn-glycero-3-phosphocholine + H2O = a 1-acyl-sn-glycero-3-phosphocholine + a fatty acid + H(+). In terms of biological role, scorpion venom phospholipase A2 (PLA2) that impacts angiogenesis in vitro and in vivo without showing any cytotoxic or apoptotic signs. The antiangiogenic effect is independent from the catalytic activity and seems to be held by its small subunit. PLA2 catalyzes the calcium-dependent hydrolysis of the 2-acyl groups in 3-sn-phosphoglycerides. This chain is Phospholipase A2 hemilipin-2, found in Hemiscorpius lepturus (Scorpion).